Here is a 162-residue protein sequence, read N- to C-terminus: UPF0178 protein Rsph17029_2512 (162 aa).

It belongs to the UPF0178 family.

This chain is UPF0178 protein Rsph17029_2512, found in Cereibacter sphaeroides (strain ATCC 17029 / ATH 2.4.9) (Rhodobacter sphaeroides).